A 134-amino-acid polypeptide reads, in one-letter code: Prefoldin subunit 4 (134 aa).

Alanine 2 carries the N-acetylalanine modification. At serine 125 the chain carries Phosphoserine.

The protein belongs to the prefoldin subunit beta family. In terms of assembly, heterohexamer of two PFD-alpha type and four PFD-beta type subunits. Interacts with URI1; the interaction is phosphorylation-dependent and occurs in a growth-dependent manner.

It is found in the nucleus. The protein resides in the cytoplasm. The protein localises to the mitochondrion. Its function is as follows. Binds specifically to cytosolic chaperonin (c-CPN) and transfers target proteins to it. Binds to nascent polypeptide chain and promotes folding in an environment in which there are many competing pathways for nonnative proteins. This is Prefoldin subunit 4 (PFDN4) from Bos taurus (Bovine).